Reading from the N-terminus, the 96-residue chain is Putative defensin-like protein 236 (96 aa).

An N-terminal signal peptide occupies residues 1–23 (MKNATSLIIYCFLMFLLMNNVKG). Cystine bridges form between Cys-31-Cys-93, Cys-41-Cys-70, Cys-49-Cys-83, and Cys-68-Cys-85.

The protein belongs to the DEFL family.

It is found in the secreted. This chain is Putative defensin-like protein 236 (SCRL20), found in Arabidopsis thaliana (Mouse-ear cress).